A 397-amino-acid chain; its full sequence is Phosphoglycerate kinase (397 aa).

Substrate contacts are provided by residues 21–23 (DVN), arginine 36, 59–62 (HFGR), arginine 119, and arginine 152. Residues lysine 202, glutamate 324, and 354-357 (GGDT) contribute to the ATP site.

It belongs to the phosphoglycerate kinase family. In terms of assembly, monomer.

It is found in the cytoplasm. It carries out the reaction (2R)-3-phosphoglycerate + ATP = (2R)-3-phospho-glyceroyl phosphate + ADP. It functions in the pathway carbohydrate degradation; glycolysis; pyruvate from D-glyceraldehyde 3-phosphate: step 2/5. The chain is Phosphoglycerate kinase from Cereibacter sphaeroides (strain ATCC 17029 / ATH 2.4.9) (Rhodobacter sphaeroides).